A 137-amino-acid polypeptide reads, in one-letter code: Small ribosomal subunit protein uS12 (137 aa).

Positions 1-25 (MPTINQLVRQGRKSKTYKSDSPALS) are disordered. 3-methylthioaspartic acid is present on Asp102.

It belongs to the universal ribosomal protein uS12 family. In terms of assembly, part of the 30S ribosomal subunit. Contacts proteins S8 and S17. May interact with IF1 in the 30S initiation complex.

In terms of biological role, with S4 and S5 plays an important role in translational accuracy. Interacts with and stabilizes bases of the 16S rRNA that are involved in tRNA selection in the A site and with the mRNA backbone. Located at the interface of the 30S and 50S subunits, it traverses the body of the 30S subunit contacting proteins on the other side and probably holding the rRNA structure together. The combined cluster of proteins S8, S12 and S17 appears to hold together the shoulder and platform of the 30S subunit. The polypeptide is Small ribosomal subunit protein uS12 (Finegoldia magna (strain ATCC 29328 / DSM 20472 / WAL 2508) (Peptostreptococcus magnus)).